Reading from the N-terminus, the 178-residue chain is DELTA-miturgitoxin-Cp3a (178 aa).

A signal peptide spans 1–18 (MKALYLLGLLAFLYSCSS). Residues 19 to 46 (ENVYDLQPESSEEENPGTFLEAIQEQSR) constitute a propeptide that is removed on maturation. Residues 43–46 (EQSR) carry the Processing quadruplet motif motif. Cystine bridges form between Cys-48–Cys-63, Cys-55–Cys-72, Cys-62–Cys-86, Cys-74–Cys-84, Cys-113–Cys-128, Cys-120–Cys-137, Cys-127–Cys-155, and Cys-139–Cys-153.

Belongs to the spider toxin CSTX family. Double-CSTX subfamily. In terms of processing, cleavage of the propeptide depends on the processing quadruplet motif (XXXR, with at least one of X being E). Expressed by the venom gland.

Its subcellular location is the secreted. Functionally, spider venom toxin that exhibits cytolytic activity by forming an alpha-helix across the membrane. Lethal to insect larvae. The chain is DELTA-miturgitoxin-Cp3a from Cheiracanthium punctorium (Yellow sac spider).